The following is a 177-amino-acid chain: Large ribosomal subunit protein uL5 (177 aa).

Belongs to the universal ribosomal protein uL5 family. As to quaternary structure, part of the 50S ribosomal subunit; part of the 5S rRNA/L5/L18/L25 subcomplex. Contacts the 5S rRNA and the P site tRNA. Forms a bridge to the 30S subunit in the 70S ribosome.

Its function is as follows. This is one of the proteins that bind and probably mediate the attachment of the 5S RNA into the large ribosomal subunit, where it forms part of the central protuberance. In the 70S ribosome it contacts protein S13 of the 30S subunit (bridge B1b), connecting the 2 subunits; this bridge is implicated in subunit movement. Contacts the P site tRNA; the 5S rRNA and some of its associated proteins might help stabilize positioning of ribosome-bound tRNAs. The sequence is that of Large ribosomal subunit protein uL5 from Ehrlichia canis (strain Jake).